The chain runs to 99 residues: MANIKSAIKRIQTAERNRLRNKSYKSAVKTLTKKCLQAIEQYAAAPSADAQAEAQKYLSATYSKIDKAVKRGVYHHNTAARKKARLAKEFKQATGQVAA.

Belongs to the bacterial ribosomal protein bS20 family.

In terms of biological role, binds directly to 16S ribosomal RNA. The polypeptide is Small ribosomal subunit protein bS20 (Picosynechococcus sp. (strain ATCC 27264 / PCC 7002 / PR-6) (Agmenellum quadruplicatum)).